Consider the following 92-residue polypeptide: Large ribosomal subunit protein eL43 (92 aa).

4 residues coordinate Zn(2+): cysteine 39, cysteine 42, cysteine 57, and cysteine 60. A C4-type zinc finger spans residues 39 to 60 (CPNCGEDRVDRQGTGIWQCSYC).

It belongs to the eukaryotic ribosomal protein eL43 family. Putative zinc-binding subfamily. In terms of assembly, part of the 50S ribosomal subunit. Contacts protein L2. Zn(2+) is required as a cofactor.

Binds to the 23S rRNA. The chain is Large ribosomal subunit protein eL43 from Haloarcula marismortui (strain ATCC 43049 / DSM 3752 / JCM 8966 / VKM B-1809) (Halobacterium marismortui).